Consider the following 163-residue polypeptide: Ribosome maturation factor RimM (163 aa).

One can recognise a PRC barrel domain in the interval glutamate 90 to leucine 161.

This sequence belongs to the RimM family. As to quaternary structure, binds ribosomal protein uS19.

The protein localises to the cytoplasm. Its function is as follows. An accessory protein needed during the final step in the assembly of 30S ribosomal subunit, possibly for assembly of the head region. Essential for efficient processing of 16S rRNA. May be needed both before and after RbfA during the maturation of 16S rRNA. It has affinity for free ribosomal 30S subunits but not for 70S ribosomes. This Anaeromyxobacter dehalogenans (strain 2CP-C) protein is Ribosome maturation factor RimM.